The sequence spans 359 residues: Peptide chain release factor 1 (359 aa).

Position 235 is an N5-methylglutamine (glutamine 235). The interval 287–312 is disordered; sequence AQEASAMRSAQVGSGDRSERIRTYNF.

This sequence belongs to the prokaryotic/mitochondrial release factor family. Methylated by PrmC. Methylation increases the termination efficiency of RF1.

The protein resides in the cytoplasm. Its function is as follows. Peptide chain release factor 1 directs the termination of translation in response to the peptide chain termination codons UAG and UAA. This Chlamydia trachomatis serovar L2 (strain ATCC VR-902B / DSM 19102 / 434/Bu) protein is Peptide chain release factor 1.